Reading from the N-terminus, the 289-residue chain is Probable endonuclease 4 (289 aa).

Positions 74, 115, 150, 184, 187, 218, 231, 233, and 263 each coordinate Zn(2+).

This sequence belongs to the AP endonuclease 2 family. Zn(2+) serves as cofactor.

It carries out the reaction Endonucleolytic cleavage to 5'-phosphooligonucleotide end-products.. In terms of biological role, endonuclease IV plays a role in DNA repair. It cleaves phosphodiester bonds at apurinic or apyrimidinic (AP) sites, generating a 3'-hydroxyl group and a 5'-terminal sugar phosphate. The polypeptide is Probable endonuclease 4 (Mycoplasma mycoides subsp. mycoides SC (strain CCUG 32753 / NCTC 10114 / PG1)).